Reading from the N-terminus, the 134-residue chain is Small ribosomal subunit protein uS11 (134 aa).

This sequence belongs to the universal ribosomal protein uS11 family. As to quaternary structure, part of the 30S ribosomal subunit. Interacts with proteins S7 and S18. Binds to IF-3.

Functionally, located on the platform of the 30S subunit, it bridges several disparate RNA helices of the 16S rRNA. Forms part of the Shine-Dalgarno cleft in the 70S ribosome. The chain is Small ribosomal subunit protein uS11 from Corynebacterium jeikeium (strain K411).